The following is a 458-amino-acid chain: Adenylosuccinate synthetase (458 aa).

GTP contacts are provided by residues glycine 17–lysine 23 and glycine 45–threonine 47. Aspartate 18 (proton acceptor) is an active-site residue. Mg(2+)-binding residues include aspartate 18 and glycine 45. IMP contacts are provided by residues aspartate 18–lysine 21, asparagine 43–histidine 46, threonine 137, arginine 151, glutamine 247, threonine 262, and arginine 330. The Proton donor role is filled by histidine 46. Valine 326–arginine 332 is a binding site for substrate. GTP is bound by residues arginine 332, lysine 358–aspartate 360, and serine 440–serine 442.

This sequence belongs to the adenylosuccinate synthetase family. As to quaternary structure, homodimer. The cofactor is Mg(2+).

The protein resides in the cytoplasm. It carries out the reaction IMP + L-aspartate + GTP = N(6)-(1,2-dicarboxyethyl)-AMP + GDP + phosphate + 2 H(+). Its pathway is purine metabolism; AMP biosynthesis via de novo pathway; AMP from IMP: step 1/2. Its function is as follows. Plays an important role in the de novo pathway of purine nucleotide biosynthesis. Catalyzes the first committed step in the biosynthesis of AMP from IMP. In Delftia acidovorans (strain DSM 14801 / SPH-1), this protein is Adenylosuccinate synthetase.